Reading from the N-terminus, the 328-residue chain is Serine protease 27 (328 aa).

Residues 1–22 (MRQPHIAALLLLPLLLRSGTEG) form the signal peptide. Positions 23-37 (ARTLRACGHPKMFNR) are cleaved as a propeptide — activation peptide. The region spanning 38 to 280 (MVGGENALEG…HHKWIHQIIP (243 aa)) is the Peptidase S1 domain. Cysteines 63 and 79 form a disulfide. His-78 (charge relay system) is an active-site residue. Asn-82 carries N-linked (GlcNAc...) asparagine glycosylation. The active-site Charge relay system is Asp-127. Intrachain disulfides connect Cys-161/Cys-238, Cys-194/Cys-217, and Cys-228/Cys-256. The active-site Charge relay system is Ser-232.

It belongs to the peptidase S1 family.

It is found in the secreted. The polypeptide is Serine protease 27 (Prss27) (Mus musculus (Mouse)).